A 238-amino-acid chain; its full sequence is MGRKWNNIKEKKAQKDKNTSRIYAKFGKEIYVAAKSGEPNPESNQALRLVLERAKTYSVPNHIIEKAIDKAKGAGDENFDHLRYEGFGPSGSMLIVDALTNNVNRTASDVRAAFGKNGGNMGVSGSVAYMFDHVATFGIEGKSVDEILETLMEQDVDVNDVIDDNGLTIVYAEPDQFAVVQDALRAAGVEEFKVAEFEMLPQTDIELSEADQVTFEKLIDALEDLEDVQNVFHNVDLK.

Belongs to the TACO1 family. YeeN subfamily.

It localises to the cytoplasm. The sequence is that of Probable transcriptional regulatory protein SAB0618 from Staphylococcus aureus (strain bovine RF122 / ET3-1).